The primary structure comprises 277 residues: Hydroxyethylthiazole kinase (277 aa).

Met-56 provides a ligand contact to substrate. The ATP site is built by Arg-131 and Thr-177. Position 204 (Ala-204) interacts with substrate.

The protein belongs to the Thz kinase family. Mg(2+) serves as cofactor.

The enzyme catalyses 5-(2-hydroxyethyl)-4-methylthiazole + ATP = 4-methyl-5-(2-phosphooxyethyl)-thiazole + ADP + H(+). It functions in the pathway cofactor biosynthesis; thiamine diphosphate biosynthesis; 4-methyl-5-(2-phosphoethyl)-thiazole from 5-(2-hydroxyethyl)-4-methylthiazole: step 1/1. Functionally, catalyzes the phosphorylation of the hydroxyl group of 4-methyl-5-beta-hydroxyethylthiazole (THZ). The protein is Hydroxyethylthiazole kinase of Gemmatimonas aurantiaca (strain DSM 14586 / JCM 11422 / NBRC 100505 / T-27).